A 224-amino-acid polypeptide reads, in one-letter code: Protein DEHYDRATION-INDUCED 19 homolog 4 (224 aa).

Polar residues predominate over residues 1 to 12; that stretch reads MDSNWINCPSVF. The interval 1-23 is disordered; the sequence is MDSNWINCPSVFSSSSSSSRRCQ. Positions 13–23 are enriched in low complexity; it reads SSSSSSSRRCQ. A Phosphothreonine modification is found at T117.

This sequence belongs to the Di19 family. Post-translationally, phosphorylated in vitro by CPK3 or CPK11. In terms of tissue distribution, expressed in seedlings, roots, leaves, stems, flowers and siliques.

The protein resides in the cytoplasm. The protein localises to the perinuclear region. This Arabidopsis thaliana (Mouse-ear cress) protein is Protein DEHYDRATION-INDUCED 19 homolog 4 (DI19-4).